Here is a 291-residue protein sequence, read N- to C-terminus: Probable L-ascorbate peroxidase 4, peroxisomal (291 aa).

Residue His40 is the Proton acceptor of the active site. Residue His160 coordinates heme b. The K(+) site is built by Thr161, Thr177, and Asp184. Residues 263–283 (VLAQSAVGVAVAAAVVIVSYL) traverse the membrane as a helical segment.

It belongs to the peroxidase family. Ascorbate peroxidase subfamily. Heme b is required as a cofactor. In terms of tissue distribution, expressed in leaves, stems and flowers.

The protein resides in the peroxisome membrane. The enzyme catalyses L-ascorbate + H2O2 = L-dehydroascorbate + 2 H2O. Its function is as follows. Plays a key role in hydrogen peroxide removal. The sequence is that of Probable L-ascorbate peroxidase 4, peroxisomal from Oryza sativa subsp. japonica (Rice).